A 357-amino-acid polypeptide reads, in one-letter code: Serpentine receptor class epsilon-31 (357 aa).

Helical transmembrane passes span Val28–Ile48, Leu61–Ile81, Leu121–Leu141, Ile165–Ile185, Ile192–Val212, Leu253–Phe273, and Phe283–Ile303.

It belongs to the nematode receptor-like protein sre family.

The protein localises to the membrane. In Caenorhabditis elegans, this protein is Serpentine receptor class epsilon-31 (sre-31).